The sequence spans 547 residues: Glucose-6-phosphate isomerase (547 aa).

The Proton donor role is filled by Glu-354. Catalysis depends on residues His-385 and Lys-513.

It belongs to the GPI family.

It is found in the cytoplasm. The catalysed reaction is alpha-D-glucose 6-phosphate = beta-D-fructose 6-phosphate. It participates in carbohydrate biosynthesis; gluconeogenesis. Its pathway is carbohydrate degradation; glycolysis; D-glyceraldehyde 3-phosphate and glycerone phosphate from D-glucose: step 2/4. In terms of biological role, catalyzes the reversible isomerization of glucose-6-phosphate to fructose-6-phosphate. The chain is Glucose-6-phosphate isomerase from Erwinia tasmaniensis (strain DSM 17950 / CFBP 7177 / CIP 109463 / NCPPB 4357 / Et1/99).